The following is a 223-amino-acid chain: Cytidylate kinase (223 aa).

11-19 (GPAGVGKST) provides a ligand contact to ATP.

Belongs to the cytidylate kinase family. Type 1 subfamily.

It localises to the cytoplasm. It carries out the reaction CMP + ATP = CDP + ADP. The catalysed reaction is dCMP + ATP = dCDP + ADP. This Maridesulfovibrio salexigens (strain ATCC 14822 / DSM 2638 / NCIMB 8403 / VKM B-1763) (Desulfovibrio salexigens) protein is Cytidylate kinase.